The following is a 271-amino-acid chain: Formamidopyrimidine-DNA glycosylase (271 aa).

P2 serves as the catalytic Schiff-base intermediate with DNA. Residue E3 is the Proton donor of the active site. K58 acts as the Proton donor; for beta-elimination activity in catalysis. 3 residues coordinate DNA: H92, R111, and K152. Residues 237 to 271 form an FPG-type zinc finger; it reads YVYGKVQKPCKICNNIITLIRQNGRSTYFCNACQN. Residue R261 is the Proton donor; for delta-elimination activity of the active site.

This sequence belongs to the FPG family. As to quaternary structure, monomer. The cofactor is Zn(2+).

It carries out the reaction Hydrolysis of DNA containing ring-opened 7-methylguanine residues, releasing 2,6-diamino-4-hydroxy-5-(N-methyl)formamidopyrimidine.. The catalysed reaction is 2'-deoxyribonucleotide-(2'-deoxyribose 5'-phosphate)-2'-deoxyribonucleotide-DNA = a 3'-end 2'-deoxyribonucleotide-(2,3-dehydro-2,3-deoxyribose 5'-phosphate)-DNA + a 5'-end 5'-phospho-2'-deoxyribonucleoside-DNA + H(+). Functionally, involved in base excision repair of DNA damaged by oxidation or by mutagenic agents. Acts as a DNA glycosylase that recognizes and removes damaged bases. Has a preference for oxidized purines, such as 7,8-dihydro-8-oxoguanine (8-oxoG). Has AP (apurinic/apyrimidinic) lyase activity and introduces nicks in the DNA strand. Cleaves the DNA backbone by beta-delta elimination to generate a single-strand break at the site of the removed base with both 3'- and 5'-phosphates. This is Formamidopyrimidine-DNA glycosylase from Wolbachia sp. subsp. Drosophila simulans (strain wRi).